Reading from the N-terminus, the 388-residue chain is S-adenosylmethionine synthase (388 aa).

His17 contributes to the ATP binding site. Asp19 contributes to the Mg(2+) binding site. Residue Glu45 participates in K(+) binding. The L-methionine site is built by Glu58 and Gln102. The tract at residues 102 to 112 is flexible loop; that stretch reads QSADIAQGVDA. ATP is bound by residues 167-169, 232-233, Asp241, 247-248, Ala264, and Lys268; these read DSK, RF, and RK. Residue Asp241 coordinates L-methionine. Residue Lys272 participates in L-methionine binding.

This sequence belongs to the AdoMet synthase family. Homotetramer; dimer of dimers. It depends on Mg(2+) as a cofactor. The cofactor is K(+).

The protein resides in the cytoplasm. It catalyses the reaction L-methionine + ATP + H2O = S-adenosyl-L-methionine + phosphate + diphosphate. The protein operates within amino-acid biosynthesis; S-adenosyl-L-methionine biosynthesis; S-adenosyl-L-methionine from L-methionine: step 1/1. Functionally, catalyzes the formation of S-adenosylmethionine (AdoMet) from methionine and ATP. The overall synthetic reaction is composed of two sequential steps, AdoMet formation and the subsequent tripolyphosphate hydrolysis which occurs prior to release of AdoMet from the enzyme. This is S-adenosylmethionine synthase from Paramagnetospirillum magneticum (strain ATCC 700264 / AMB-1) (Magnetospirillum magneticum).